A 308-amino-acid polypeptide reads, in one-letter code: Nodulation protein D 1 (308 aa).

An HTH lysR-type domain is found at 6–63 (LDLNLLVALDALMTERNLTAAARSINLSQPAMSAAVGRLRVYFEDELFTMNGRELVLT). The H-T-H motif DNA-binding region spans 23-42 (LTAAARSINLSQPAMSAAVG).

Belongs to the LysR transcriptional regulatory family.

Its function is as follows. NodD regulates the expression of the nodABCFE genes which encode other nodulation proteins. NodD is also a negative regulator of its own expression. Binds flavonoids as inducers. The chain is Nodulation protein D 1 (nodD1) from Rhizobium tropici.